A 466-amino-acid chain; its full sequence is FERM domain-containing protein 8 (466 aa).

The residue at position 1 (Met-1) is an N-acetylmethionine. Residues 1–21 are disordered; sequence MEGAEGNAGQPGPAERSHRSS. Ser-24 is subject to Phosphoserine. The FERM domain occupies 30-377; sequence ADVLVYLADD…YCIELSQAAE (348 aa). Positions 379–409 are disordered; that stretch reads TLSQESASGPHEAPSPSPPPTQRPKLRRQGS. At Ser-384 the chain carries Phosphoserine. Residues 391–400 show a composition bias toward pro residues; it reads APSPSPPPTQ. At Ser-409 the chain carries Phosphoserine. Residue Thr-420 is modified to Phosphothreonine. 2 positions are modified to phosphoserine: Ser-440 and Ser-447. Over residues 442–460 the composition is skewed to polar residues; it reads FSRQLSSSQGSYTVVQPTD. The interval 442 to 466 is disordered; the sequence is FSRQLSSSQGSYTVVQPTDDSLEQS.

Interacts with iRhom proteins, including iRhom2/RHBDF2 (via cytoplasmic N-termini); this interaction leads to mutual protein stabilization. Interacts with LRP6; this interaction affects LRP6-binding to AXIN1. In terms of tissue distribution, widely expressed (at protein level).

It localises to the cytoplasm. It is found in the cytosol. The protein localises to the cell membrane. Functionally, promotes the cell surface stability of iRhom1/RHBDF1 and iRhom2/RHBDF2 and prevents their degradation via the endolysosomal pathway. By acting on iRhoms, involved in ADAM17-mediated shedding of TNF, amphiregulin/AREG, HBEGF and TGFA from the cell surface. Negatively regulates Wnt signaling, possibly by antagonizing the recruitment of AXIN1 to LRP6. This is FERM domain-containing protein 8 (Frmd8) from Mus musculus (Mouse).